The primary structure comprises 115 residues: V-type proton ATPase subunit G (115 aa).

Belongs to the V-ATPase G subunit family. V-ATPase is a heteromultimeric enzyme composed of a peripheral catalytic V1 complex (components A to H) attached to an integral membrane V0 proton pore complex (components: a, c, c', c'', d, e, f and VOA1).

The protein localises to the vacuole membrane. In terms of biological role, subunit of the V1 complex of vacuolar(H+)-ATPase (V-ATPase), a multisubunit enzyme composed of a peripheral complex (V1) that hydrolyzes ATP and a membrane integral complex (V0) that translocates protons. V-ATPase is responsible for acidifying and maintaining the pH of intracellular compartments. This chain is V-type proton ATPase subunit G (vma-10), found in Neurospora crassa (strain ATCC 24698 / 74-OR23-1A / CBS 708.71 / DSM 1257 / FGSC 987).